The following is a 727-amino-acid chain: MPSVSKAAAAALSGSPPQTEKPTHYRYLKEFRTEQCSLFLQHKCSQHRPFTCFHWHFLNQRRRRPLRRRDGTFNYSPDIYCSKYDEATGLCPDGDECPYLHRTTGDTERKYHLRYYKTGTCIHETDARGHCVKNGLHCAFAHGPLDLRPPVCDIRELQAQEALQNGQLSGGDGVPDLQPGVLASQAMIEKILGEDPRWQDSNFVLGSYKTEQCPKPPRLCRQGYACPHYHNSRDRRRNPRRFQYRSTPCPSVKHGDEWGEPSRCDGGDSCQYCHSRTEQQFHPEIYKSTKCNDMRQTGYCPRGPFCAFAHTEKSLAMVNEWSCRDLSSNSTSAYSSQPGSAKRKDSPSEGSQKATEDSKQNHLAVFSVAHPLAHSISSSVASSLASSTGSGSSSPTTLPTLPARALPLDPAGNTVGAVIGSALDLRLSDINIASLDKDLEEQDLGLTGPRSLAGSAPVTIPGSLPRSPSLHSSSSLSTSPLSSLSQSLSGPLVSSAMTPPQQPPPLRSEPATLGSAASSYSSLGLNGVPGSIWDFVSGSFSPSPSPILNSGPSASSSASPNSAELARVRRQLDEAKRKIRQWEESWQQVKQACDAWQREAQEAKERARVADSDRQLALQRKEEVEAKVKQLQEELEGLGLSSLPGLQSLGDISDIPLPKLHSLQSKLRLDLEAVDGVIFQLRAKQCVACQERAHGTVLRPCQHRVLCEPCAASTPECPYCKGQPLPW.

The segment at 1-21 (MPSVSKAAAAALSGSPPQTEK) is disordered. 4 C3H1-type zinc fingers span residues 75–104 (YSPD…HRTT), 115–145 (YYKT…HGPL), 243–277 (QYRS…HSRT), and 285–313 (IYKS…HTEK). A compositionally biased stretch (polar residues) spans 330-339 (STSAYSSQPG). Disordered stretches follow at residues 330-360 (STSA…DSKQ), 446-514 (LTGP…ATLG), and 543-562 (SPSP…SPNS). Low complexity predominate over residues 463–495 (SLPRSPSLHSSSSLSTSPLSSLSQSLSGPLVSS). An RING-type zinc finger spans residues 686 to 721 (CVACQERAHGTVLRPCQHRVLCEPCAASTPECPYCK).

The protein belongs to the unkempt family. In terms of assembly, interacts with the GTP-bound form of Rac1. Interacts with Baf60b/Smarcd2. In terms of processing, ubiquitination is enhanced by activated Rac1. The presence of the RING finger domain is not essential for ubiquitination to occur. In terms of tissue distribution, ubiquitous.

It is found in the cytoplasm. The protein resides in the nucleus. The protein operates within protein modification; protein ubiquitination. Its function is as follows. May participate in a protein complex showing an E3 ligase activity regulated by Rac1. Ubiquitination is directed towards itself and possibly other substrates, such as Baf60b/Smarcd2. Intrinsic E3 ligase activity has not been proven. In Mus musculus (Mouse), this protein is Putative E3 ubiquitin-protein ligase UNKL (Unkl).